A 181-amino-acid chain; its full sequence is Mating-type M-specific polypeptide Mc (181 aa).

The HMG box DNA-binding region spans 103–171 (TPRPPNAFIL…QHQKMYPGYK (69 aa)).

The protein resides in the nucleus. Functionally, mating type proteins are sequence specific DNA-binding proteins that act as master switches in yeast differentiation by controlling gene expression in a cell type-specific fashion. Positive regulator of MFM genes. The HMG box recognizes the DNA sequence 5'-AACAAAG-3'. Required for conjugation and efficient meiosis. This chain is Mating-type M-specific polypeptide Mc (matMc), found in Schizosaccharomyces kambucha (Fission yeast).